The following is a 264-amino-acid chain: Small ribosomal subunit protein uS3 (264 aa).

The KH type-2 domain maps to Val39–Arg107. The tract at residues Glu217–Glu264 is disordered. Residues Arg230–Glu241 show a composition bias toward basic and acidic residues. A compositionally biased stretch (gly residues) spans Arg253–Glu264.

Belongs to the universal ribosomal protein uS3 family. In terms of assembly, part of the 30S ribosomal subunit. Forms a tight complex with proteins S10 and S14.

In terms of biological role, binds the lower part of the 30S subunit head. Binds mRNA in the 70S ribosome, positioning it for translation. The sequence is that of Small ribosomal subunit protein uS3 from Paraburkholderia phymatum (strain DSM 17167 / CIP 108236 / LMG 21445 / STM815) (Burkholderia phymatum).